Here is a 901-residue protein sequence, read N- to C-terminus: Sperm-associated antigen 1 (901 aa).

TPR repeat units lie at residues 213–246, 247–279, and 280–313; these read ANRE…LPTA, IAYN…DPGN, and VKAL…EPDN. The segment at 322–437 is disordered; it reads EVERDLKNSE…DNPSGLKRRG (116 aa). Phosphoserine is present on residues S351 and S359. TPR repeat units lie at residues 430-464, 472-505, 507-539, 606-639, and 640-673; these read PSGL…EPTG, SILY…HPFS, KPLL…DCGI, FQAL…NSKA, and CAIY…DGEN. The disordered stretch occupies residues 694-776; that stretch reads GVDPSQVLLS…AEPAEKLDVS (83 aa). The residue at position 703 (S703) is a Phosphoserine. Positions 708-717 are enriched in basic and acidic residues; that stretch reads EAARHLDTKN. Residues S739 and S740 each carry the phosphoserine modification. 756–763 is a GTP binding site; sequence PARDGVED. Phosphoserine is present on S766.

In terms of tissue distribution, detected in cerebellum, tongue, esophagus, forestomach, sperm and testis.

It is found in the cytoplasm. The protein resides in the dynein axonemal particle. Functionally, may play a role in the cytoplasmic assembly of the ciliary dynein arms. May play a role in fertilization. Binds GTP and has GTPase activity. The protein is Sperm-associated antigen 1 (Spag1) of Mus musculus (Mouse).